A 1577-amino-acid polypeptide reads, in one-letter code: Dynamin-binding protein (1577 aa).

Residue Met-1 is modified to N-acetylmethionine. SH3 domains are found at residues 2 to 61 (EPGS…IVTI), 66 to 126 (EGER…ELCL), and 145 to 204 (YSMG…LLGP). The interval 209-242 (DESVNAGSGDDSTLNDEVDVSPEEVESEGDEDDQ) is disordered. The segment covering 221–242 (TLNDEVDVSPEEVESEGDEDDQ) has biased composition (acidic residues). Positions 243-302 (QAGTYGIALYRFQALESNELDFEVGDKIRILGTLEDGWLEGRLKGKTGIFPHRFVKLCPS) constitute an SH3 4 domain. Disordered regions lie at residues 307 to 361 (ETMA…EEPL) and 375 to 437 (GQDE…SRQC). Over residues 400-410 (PDLSQEVNGIS) the composition is skewed to polar residues. Ser-494 bears the Phosphoserine mark. 2 disordered regions span residues 519-547 (PERP…DNLD) and 590-681 (RGSS…SEYT). Low complexity predominate over residues 617–626 (TPTSTSPHLL). Positions 632–651 (KPGPPLVVRPSRPAPLPPPT) are enriched in pro residues. The span at 652–662 (QQRLNTASPKP) shows a compositional bias: polar residues. The span at 672–681 (APEKEGSEYT) shows a compositional bias: basic and acidic residues. The residue at position 684 (Ser-684) is a Phosphoserine. Residues 705–755 (LDMHTRAQEELNLLLEEKQDESLRAETLETLKSYESTIQSLNLELQQLREM) adopt a coiled-coil conformation. In terms of domain architecture, DH spans 784–967 (KRAKVVAELL…KEINANINEY (184 aa)). The BAR domain occupies 1008–1217 (LKHLTGFAPQ…LKASDREGNL (210 aa)). Residues 1285 to 1348 (PPEKLFHVQR…YSSFLKPYNP (64 aa)) form the SH3 5 domain. Over residues 1353–1375 (SDSSVVSHSSTESEHSGSSPSFH) the composition is skewed to low complexity. Disordered regions lie at residues 1353-1381 (SDSS…NSSS) and 1415-1510 (ETLG…LGSS). Polar residues-rich tracts occupy residues 1418–1428 (GVSSNTGNPET) and 1484–1497 (DQGS…SRAC). Residues 1513–1576 (EGNQVYFAIY…PSNYIRKTEY (64 aa)) enclose the SH3 6 domain.

As to quaternary structure, binds DNM1 via its N-terminal SH3 domains. The C-terminal SH3 domain binds a complex containing actin, tubulin, Hsp70 and actin-regulatory proteins, such as ENAH, EVL, WIRE, CR16, WAVE1 and NAP1L1. Interacts with FASLG. Interacts (via SH3 domain 6) with WASL. Interacts (via SH3 domain 6) interacts with ENAH. Interacts (via C-terminal domain) with TJP1; required for the apical cell-cell junction localization of DNMBP. Widely expressed.

The protein resides in the cytoplasm. It localises to the golgi apparatus. Its subcellular location is the golgi stack. It is found in the cytoskeleton. The protein localises to the synapse. The protein resides in the cell junction. Plays a critical role as a guanine nucleotide exchange factor (GEF) for CDC42 in several intracellular processes associated with the actin and microtubule cytoskeleton. Regulates the structure of apical junctions in epithelial cells. Participates in the normal lumenogenesis of epithelial cell cysts by regulating spindle orientation. Plays a role in ciliogenesis. May play a role in membrane trafficking between the cell surface and the Golgi. This is Dynamin-binding protein from Rattus norvegicus (Rat).